We begin with the raw amino-acid sequence, 106 residues long: Large ribosomal subunit protein bL21 (106 aa).

This sequence belongs to the bacterial ribosomal protein bL21 family. Part of the 50S ribosomal subunit. Contacts protein L20.

In terms of biological role, this protein binds to 23S rRNA in the presence of protein L20. The polypeptide is Large ribosomal subunit protein bL21 (Syntrophobacter fumaroxidans (strain DSM 10017 / MPOB)).